A 96-amino-acid polypeptide reads, in one-letter code: UPF0235 protein SO_3356 (96 aa).

It belongs to the UPF0235 family.

This Shewanella oneidensis (strain ATCC 700550 / JCM 31522 / CIP 106686 / LMG 19005 / NCIMB 14063 / MR-1) protein is UPF0235 protein SO_3356.